The following is a 554-amino-acid chain: Intraflagellar transport protein 56 (554 aa).

Residues 1 to 24 (MMLSRAKPAVGRGVQHTDKRKKKG) are disordered. TPR repeat units follow at residues 57–90 (EDTN…ENCN), 92–125 (EVWV…LQNR), 151–184 (TEDQ…NREY), and 468–501 (ANDC…EGKR).

It belongs to the IFT56 family. As to quaternary structure, component of the IFT complex B. Interacts with IFT46; the interaction is direct.

The protein resides in the cell projection. It is found in the cilium. In terms of biological role, component of the intraflagellar transport (IFT) complex B required for transport of proteins in the motile cilium. Required for transport of specific ciliary cargo proteins related to motility, while it is neither required for IFT complex B assembly or motion nor for cilium assembly. Required for efficient coupling between the accumulation of GLI2 and GLI3 at the ciliary tips and their dissociation from the negative regulator SUFU. Plays a key role in maintaining the integrity of the IFT complex B and the proper ciliary localization of the IFT complex B components. Not required for IFT complex A ciliary localization or function. Essential for maintaining proper microtubule organization within the ciliary axoneme. In Homo sapiens (Human), this protein is Intraflagellar transport protein 56.